The chain runs to 148 residues: Probable calcium-binding protein CML14 (148 aa).

EF-hand domains follow at residues 9-44 (DQVS…LGGN), 80-115 (PFDR…IGEK), and 116-148 (LQPS…MVAK). Asp-22, Asp-24, Asp-26, Lys-28, and Glu-33 together coordinate Ca(2+).

Functionally, potential calcium sensor. The sequence is that of Probable calcium-binding protein CML14 (CML14) from Arabidopsis thaliana (Mouse-ear cress).